Reading from the N-terminus, the 248-residue chain is 2,3-bisphosphoglycerate-dependent phosphoglycerate mutase (248 aa).

Residues arginine 8–asparagine 15, threonine 21–glycine 22, arginine 60, glutamate 87–tyrosine 90, lysine 98, arginine 114–arginine 115, and glycine 183–asparagine 184 each bind substrate. Histidine 9 acts as the Tele-phosphohistidine intermediate in catalysis. Catalysis depends on glutamate 87, which acts as the Proton donor/acceptor.

The protein belongs to the phosphoglycerate mutase family. BPG-dependent PGAM subfamily.

The enzyme catalyses (2R)-2-phosphoglycerate = (2R)-3-phosphoglycerate. The protein operates within carbohydrate degradation; glycolysis; pyruvate from D-glyceraldehyde 3-phosphate: step 3/5. Catalyzes the interconversion of 2-phosphoglycerate and 3-phosphoglycerate. This chain is 2,3-bisphosphoglycerate-dependent phosphoglycerate mutase, found in Methanospirillum hungatei JF-1 (strain ATCC 27890 / DSM 864 / NBRC 100397 / JF-1).